The following is a 127-amino-acid chain: Small ribosomal subunit protein uS13 (127 aa).

Positions 93–127 (RRSLPVRGQRTHTNARTRKGPRKGTVANKKKATAK) are disordered.

Belongs to the universal ribosomal protein uS13 family. Part of the 30S ribosomal subunit. Forms a loose heterodimer with protein S19. Forms two bridges to the 50S subunit in the 70S ribosome.

Functionally, located at the top of the head of the 30S subunit, it contacts several helices of the 16S rRNA. In the 70S ribosome it contacts the 23S rRNA (bridge B1a) and protein L5 of the 50S subunit (bridge B1b), connecting the 2 subunits; these bridges are implicated in subunit movement. Contacts the tRNAs in the A and P-sites. The chain is Small ribosomal subunit protein uS13 from Koribacter versatilis (strain Ellin345).